The sequence spans 238 residues: LexA repressor (238 aa).

The segment at residues 26–46 (FDEMKDALELRSKSGIHRLIS) is a DNA-binding region (H-T-H motif). Residues Ser159 and Lys197 each act as for autocatalytic cleavage activity in the active site.

This sequence belongs to the peptidase S24 family. Homodimer.

It catalyses the reaction Hydrolysis of Ala-|-Gly bond in repressor LexA.. In terms of biological role, represses a number of genes involved in the response to DNA damage (SOS response), including recA and lexA. In the presence of single-stranded DNA, RecA interacts with LexA causing an autocatalytic cleavage which disrupts the DNA-binding part of LexA, leading to derepression of the SOS regulon and eventually DNA repair. This Gluconobacter oxydans (strain 621H) (Gluconobacter suboxydans) protein is LexA repressor.